The sequence spans 188 residues: Holliday junction branch migration complex subunit RuvA (188 aa).

The segment at 1-64 (MIAGISGRVL…QDGITLYGFS (64 aa)) is domain I. The interval 65 to 143 (NERKKELFLS…SAGIKDMRIY (79 aa)) is domain II. Position 143 (tyrosine 143) is a region of interest, flexible linker. Residues 143 to 188 (YHESLEALISLGYPEKQAREAVKHVYREGMKTSELIKEALKFLSQR) are domain III.

This sequence belongs to the RuvA family. As to quaternary structure, homotetramer. Forms an RuvA(8)-RuvB(12)-Holliday junction (HJ) complex. HJ DNA is sandwiched between 2 RuvA tetramers; dsDNA enters through RuvA and exits via RuvB. An RuvB hexamer assembles on each DNA strand where it exits the tetramer. Each RuvB hexamer is contacted by two RuvA subunits (via domain III) on 2 adjacent RuvB subunits; this complex drives branch migration. In the full resolvosome a probable DNA-RuvA(4)-RuvB(12)-RuvC(2) complex forms which resolves the HJ.

It is found in the cytoplasm. The RuvA-RuvB-RuvC complex processes Holliday junction (HJ) DNA during genetic recombination and DNA repair, while the RuvA-RuvB complex plays an important role in the rescue of blocked DNA replication forks via replication fork reversal (RFR). RuvA specifically binds to HJ cruciform DNA, conferring on it an open structure. The RuvB hexamer acts as an ATP-dependent pump, pulling dsDNA into and through the RuvAB complex. HJ branch migration allows RuvC to scan DNA until it finds its consensus sequence, where it cleaves and resolves the cruciform DNA. This chain is Holliday junction branch migration complex subunit RuvA, found in Thermotoga petrophila (strain ATCC BAA-488 / DSM 13995 / JCM 10881 / RKU-1).